The primary structure comprises 695 residues: Exocyst complex component EXO70C2 (695 aa).

Residues 1–36 show a composition bias toward basic and acidic residues; it reads MEKNDKDPDHDDKSKGDEKGDVVSDAHPSDDAHHQD. 2 disordered regions span residues 1 to 71 and 210 to 229; these read MEKN…EEAP and VVTDDSNSQRRSTADQQDHQ. At Thr212 the chain carries Phosphothreonine. Phosphoserine occurs at positions 215 and 217. Residue Thr446 is modified to Phosphothreonine. 2 positions are modified to phosphoserine: Ser494 and Ser605.

Belongs to the EXO70 family. As to quaternary structure, interacts with ROH1A and ROH1D independently of its phosphorylation status. Phosphorylation on Ser and Thr residues promotes its ability to repress pollen tube growth and to regulate cellular architecture at the pollen tube tip. As to expression, expressed in anthers, pollen and root trichoblast cells. Also observed in anther tapetum.

It is found in the cytoplasm. In terms of biological role, required for optimal tip growth of pollen tube; dose-dependent negative regulator of exocyst function in pollen tube growth and cellular architecture at the pollen tube tip, probably by modulating membrane trafficking and exocytosis dynamics. The chain is Exocyst complex component EXO70C2 from Arabidopsis thaliana (Mouse-ear cress).